Here is a 367-residue protein sequence, read N- to C-terminus: tRNA N6-adenosine threonylcarbamoyltransferase (367 aa).

Fe cation contacts are provided by H123 and H127. Substrate-binding positions include 145 to 149, D178, G191, and N288; that span reads LVSGG. D316 is a Fe cation binding site.

Belongs to the KAE1 / TsaD family. It depends on Fe(2+) as a cofactor.

The protein localises to the cytoplasm. The catalysed reaction is L-threonylcarbamoyladenylate + adenosine(37) in tRNA = N(6)-L-threonylcarbamoyladenosine(37) in tRNA + AMP + H(+). Required for the formation of a threonylcarbamoyl group on adenosine at position 37 (t(6)A37) in tRNAs that read codons beginning with adenine. Is involved in the transfer of the threonylcarbamoyl moiety of threonylcarbamoyl-AMP (TC-AMP) to the N6 group of A37, together with TsaE and TsaB. TsaD likely plays a direct catalytic role in this reaction. This chain is tRNA N6-adenosine threonylcarbamoyltransferase, found in Caulobacter vibrioides (strain ATCC 19089 / CIP 103742 / CB 15) (Caulobacter crescentus).